A 216-amino-acid polypeptide reads, in one-letter code: Thymidylate kinase (216 aa).

10-17 (GVDGSGKT) is an ATP binding site.

This sequence belongs to the thymidylate kinase family.

The enzyme catalyses dTMP + ATP = dTDP + ADP. Functionally, phosphorylation of dTMP to form dTDP in both de novo and salvage pathways of dTTP synthesis. This chain is Thymidylate kinase, found in Pelotomaculum thermopropionicum (strain DSM 13744 / JCM 10971 / SI).